The primary structure comprises 572 residues: MRVSKYLLSTQKETPANAEVVSHQLMLRAGMIRRNASGLYSYLPTGLRVLRKVEAIVREEMNKAGAIEILMPMVQPGDLWVETGRWDQFGPELLRFTDRHNRDFVLGPTHEEVITDLIRKEVSSYKQLPLNLYQIQTKFRDEVRPRFGVMRSREFLMKDAYSFHLTQETLDETYQAMYTAYSNIFSRMGLAFRPVLADTGSIGGSVSHEFHVLAQSGEDLIAYSTGSDYAANIEKAEAPLPTEPRGEATEALRTVDTPNAKTIAELVEQFGVAIEKTIKTLIVKGATEEAPLVALLVRGDHELNEIKADKLELVASPLEFAGEAEIRAAVGAGTGSIGPVNLKMPIIADHSVLVMSDFAAGANEDGKHFFGINWERDLPLVQGADIRNVVEGEATPDGKGTYAFARGIEVGHIFQLGNKYSEAMNATVLDENGKSQIMLMGCYGVGVSRIVAAAIEQNNDERGIVWPEAIAPFTVGILPMNMHKSHRVTDTAEALYKELTEAGFEVLFDDRKERPGVMFADMELLGIPHTVVIGDRNIDTGVYEYKNRRTGEKTEVPFAELVSFLKAQFQQG.

The protein belongs to the class-II aminoacyl-tRNA synthetase family. ProS type 1 subfamily. Homodimer.

It localises to the cytoplasm. It carries out the reaction tRNA(Pro) + L-proline + ATP = L-prolyl-tRNA(Pro) + AMP + diphosphate. Functionally, catalyzes the attachment of proline to tRNA(Pro) in a two-step reaction: proline is first activated by ATP to form Pro-AMP and then transferred to the acceptor end of tRNA(Pro). As ProRS can inadvertently accommodate and process non-cognate amino acids such as alanine and cysteine, to avoid such errors it has two additional distinct editing activities against alanine. One activity is designated as 'pretransfer' editing and involves the tRNA(Pro)-independent hydrolysis of activated Ala-AMP. The other activity is designated 'posttransfer' editing and involves deacylation of mischarged Ala-tRNA(Pro). The misacylated Cys-tRNA(Pro) is not edited by ProRS. The protein is Proline--tRNA ligase of Shewanella amazonensis (strain ATCC BAA-1098 / SB2B).